Consider the following 177-residue polypeptide: LOB domain-containing protein 33 (177 aa).

One can recognise an LOB domain in the interval 6 to 108; sequence SSCGACKFLR…EEIEFLGSQM (103 aa).

This sequence belongs to the LOB domain-containing protein family. Expressed in roots.

In Arabidopsis thaliana (Mouse-ear cress), this protein is LOB domain-containing protein 33 (LBD33).